Reading from the N-terminus, the 250-residue chain is MKKLIIANWKMFKTLNDIKTFKEEFDKNIKNVKVNADYSVGVPSIYLNQAKEILKGIKVIAQDAHFKNEGAYTGNISWSQLKDCGIDGSIIGHSERRQMFNETDETVNLKTISLVENNMQAVVCVGETLEEYEANKSFDVVWNQTKKALANVSEAQLKNVVIAYEPVWAIGTGKVPTGKEVDDLIQKVRDELSKLYSKQAVESLVVLYGGSVNDKNAEEFFKQKNINGALVGSFCLKAENFVKLIELGGN.

8–10 (NWK) serves as a coordination point for substrate. His-93 acts as the Electrophile in catalysis. Glu-165 functions as the Proton acceptor in the catalytic mechanism. Gly-171 and Ser-211 together coordinate substrate.

The protein belongs to the triosephosphate isomerase family. Homodimer.

The protein localises to the cytoplasm. It carries out the reaction D-glyceraldehyde 3-phosphate = dihydroxyacetone phosphate. It participates in carbohydrate biosynthesis; gluconeogenesis. It functions in the pathway carbohydrate degradation; glycolysis; D-glyceraldehyde 3-phosphate from glycerone phosphate: step 1/1. Functionally, involved in the gluconeogenesis. Catalyzes stereospecifically the conversion of dihydroxyacetone phosphate (DHAP) to D-glyceraldehyde-3-phosphate (G3P). This is Triosephosphate isomerase from Malacoplasma penetrans (strain HF-2) (Mycoplasma penetrans).